We begin with the raw amino-acid sequence, 298 residues long: Small ribosomal subunit protein uS2 (298 aa).

2 stretches are compositionally biased toward basic and acidic residues: residues 237–259 (QSKE…DGQK) and 280–298 (PKSE…ENKG). The disordered stretch occupies residues 237 to 298 (QSKELDDKAD…DAAKLPENKG (62 aa)).

Belongs to the universal ribosomal protein uS2 family.

This is Small ribosomal subunit protein uS2 from Neorickettsia sennetsu (strain ATCC VR-367 / Miyayama) (Ehrlichia sennetsu).